The chain runs to 645 residues: MQGPNVAAMGATGGTQLSFADLAHAQGAAWTPADEMSLRETTFVVVDLETTGGRTTGNDATPPDAITEIGAVKVCGGAVLGEFATLVNPQHSIPPQIVRLTGITTAMVGNAPTIDAVLPMFFEFAGDSVLVAHNAGFDIGFLRAAARRCDITWPQPQVLCTMRLARRVLSRDEAPSVRLAALARLFAVASNPTHRALDDARATVDVLHALIERVGNQGVHTYAELRSYLPNVTQAQRCKRVLAETLPHRPGVYLFRGPSGEVLYVGTAADLRRRVSQYFNGTDRRKRMTEMVMLASSIDHVECAHPLEAGVRELRMLSTHAPPYNRRSKFPYRWWWVALTDEAFPRLSVIRAPRHDRVVGPFRSRSKAAETAALLARCTGLRTCTTRLTRSARHGPACPELEVSACPAARDVTAAQYAEAVLRAAALIGGLDNAALAAAVQQVTELAERRRYESAARLRDHLATAIEALWHGQRLRALAALPELIAAKPDGPREGGYQLAVIRHGQLAAAGRAPRGVPPMPVVDAIRRGAQAILPTPAPLGGALVEEIALIARWLAEPGVRIVGVSNDAAGLASPVRSAGPWAAWAATARSAQLAGEQLSRGWQSDLPTEPHPSREQLFGRTGVDCRTGPPQPLLPGRQPFSTAG.

In terms of domain architecture, Exonuclease spans 44–207 (VVVDLETTGG…DDARATVDVL (164 aa)). In terms of domain architecture, GIY-YIG spans 248 to 326 (HRPGVYLFRG…LSTHAPPYNR (79 aa)). The disordered stretch occupies residues 603-645 (WQSDLPTEPHPSREQLFGRTGVDCRTGPPQPLLPGRQPFSTAG). Positions 635–645 (LPGRQPFSTAG) are enriched in low complexity.

The protein is Putative bifunctional exonuclease/endonuclease protein MT2247 of Mycobacterium tuberculosis (strain CDC 1551 / Oshkosh).